The sequence spans 273 residues: Phosphatidylglycerol--prolipoprotein diacylglyceryl transferase (273 aa).

Helical transmembrane passes span 21–41, 60–80, 95–115, 124–144, 176–196, 203–223, and 237–257; these read VSIRWYGLMYLVGFMFALWLA, LLFAGFLGVVIGGRVGYVIFY, VWTGGMSFHGGLLGVITAMFW, FFGVADFVAPLVPFGLGMGRM, SQLYEMLLEGVVLFFILNWFI, GSVSGLFLAGYGTFRFLVEFV, and ISMGQILSMPMIVLGILMMVW. Arg143 lines the a 1,2-diacyl-sn-glycero-3-phospho-(1'-sn-glycerol) pocket.

Belongs to the Lgt family.

The protein resides in the cell inner membrane. The catalysed reaction is L-cysteinyl-[prolipoprotein] + a 1,2-diacyl-sn-glycero-3-phospho-(1'-sn-glycerol) = an S-1,2-diacyl-sn-glyceryl-L-cysteinyl-[prolipoprotein] + sn-glycerol 1-phosphate + H(+). Its pathway is protein modification; lipoprotein biosynthesis (diacylglyceryl transfer). Catalyzes the transfer of the diacylglyceryl group from phosphatidylglycerol to the sulfhydryl group of the N-terminal cysteine of a prolipoprotein, the first step in the formation of mature lipoproteins. This chain is Phosphatidylglycerol--prolipoprotein diacylglyceryl transferase, found in Vibrio parahaemolyticus serotype O3:K6 (strain RIMD 2210633).